Here is an 84-residue protein sequence, read N- to C-terminus: RNA-binding protein Hfq (84 aa).

Positions Asp-10–Leu-70 constitute a Sm domain.

It belongs to the Hfq family. Homohexamer.

RNA chaperone that binds small regulatory RNA (sRNAs) and mRNAs to facilitate mRNA translational regulation in response to envelope stress, environmental stress and changes in metabolite concentrations. Also binds with high specificity to tRNAs. In Natranaerobius thermophilus (strain ATCC BAA-1301 / DSM 18059 / JW/NM-WN-LF), this protein is RNA-binding protein Hfq.